The primary structure comprises 92 residues: Small ribosomal subunit protein uS19 (92 aa).

The protein belongs to the universal ribosomal protein uS19 family.

In terms of biological role, protein S19 forms a complex with S13 that binds strongly to the 16S ribosomal RNA. The sequence is that of Small ribosomal subunit protein uS19 (rpsS) from Rickettsia prowazekii (strain Madrid E).